The primary structure comprises 216 residues: Somatotropin (216 aa).

Residues 1–25 (MAPGSWFSPLLIAVVTLGLPQEAAA) form the signal peptide. Residue His-45 participates in Zn(2+) binding. Cys-78 and Cys-189 are oxidised to a cystine. Residue Glu-198 coordinates Zn(2+). Cysteines 206 and 214 form a disulfide.

This sequence belongs to the somatotropin/prolactin family.

The protein resides in the secreted. In terms of biological role, growth hormone plays an important role in growth control. The sequence is that of Somatotropin (GH) from Gallus gallus (Chicken).